The primary structure comprises 153 residues: Small ribosomal subunit protein uS13 (153 aa).

The tract at residues arginine 129–asparagine 153 is disordered. Positions valine 143–asparagine 153 are enriched in polar residues.

This sequence belongs to the universal ribosomal protein uS13 family. As to quaternary structure, part of the 30S ribosomal subunit. Forms a loose heterodimer with protein S19. Forms two bridges to the 50S subunit in the 70S ribosome.

Functionally, located at the top of the head of the 30S subunit, it contacts several helices of the 16S rRNA. In the 70S ribosome it contacts the 23S rRNA (bridge B1a) and protein L5 of the 50S subunit (bridge B1b), connecting the 2 subunits; these bridges are implicated in subunit movement. The chain is Small ribosomal subunit protein uS13 from Methanosphaera stadtmanae (strain ATCC 43021 / DSM 3091 / JCM 11832 / MCB-3).